Here is a 151-residue protein sequence, read N- to C-terminus: MATIENRLEEMLKSPVEALGHTLWGLEYVQAGKHSILRVYIDNEKGIFIEDCAETSRQVSAVLDVEDPISTEYTLEVSSPGVDRPLFKAEQYAAYIDETVKIQLTMPVAGSRNLKGTITGIEGQMLSLTVDGNELIIALDNIRKGNLIAKF.

It belongs to the RimP family.

Its subcellular location is the cytoplasm. Functionally, required for maturation of 30S ribosomal subunits. The protein is Ribosome maturation factor RimP of Shewanella sediminis (strain HAW-EB3).